A 21-amino-acid polypeptide reads, in one-letter code: Nigrocin-2 (21 aa).

A disulfide bridge links cysteine 15 with cysteine 21.

In terms of tissue distribution, expressed by the skin dorsal glands.

Its subcellular location is the secreted. Its function is as follows. Thanks to its single linear amphipathic alpha-helix, may integrate into membrane phospholipids, leading to lysis of the membrane. Shows antibacterial activity against both Gram-positive and Gram-negative bacteria and against the fungus C.albicans. Has no hemolytic activity. This is Nigrocin-2 from Pelophylax nigromaculatus (Black-spotted frog).